Reading from the N-terminus, the 186-residue chain is ATP synthase subunit delta (186 aa).

It belongs to the ATPase delta chain family. F-type ATPases have 2 components, F(1) - the catalytic core - and F(0) - the membrane proton channel. F(1) has five subunits: alpha(3), beta(3), gamma(1), delta(1), epsilon(1). F(0) has three main subunits: a(1), b(2) and c(10-14). The alpha and beta chains form an alternating ring which encloses part of the gamma chain. F(1) is attached to F(0) by a central stalk formed by the gamma and epsilon chains, while a peripheral stalk is formed by the delta and b chains.

It is found in the cell membrane. F(1)F(0) ATP synthase produces ATP from ADP in the presence of a proton or sodium gradient. F-type ATPases consist of two structural domains, F(1) containing the extramembraneous catalytic core and F(0) containing the membrane proton channel, linked together by a central stalk and a peripheral stalk. During catalysis, ATP synthesis in the catalytic domain of F(1) is coupled via a rotary mechanism of the central stalk subunits to proton translocation. Its function is as follows. This protein is part of the stalk that links CF(0) to CF(1). It either transmits conformational changes from CF(0) to CF(1) or is implicated in proton conduction. The protein is ATP synthase subunit delta of Wolbachia pipientis wMel.